We begin with the raw amino-acid sequence, 269 residues long: MESLNILISNDDGVFAEGIRALARSALKKGHKVTVVCPDQERSATGHGLTLQSPLRVERADELFEPGIKAWGCSGTPADCVKLALSELLDKKPDLILSGVNHGPNLGTDIFCSGTVAAAMEGTLENVPSMAISVASFKWKNFEFASEIAMNIAEQAIKDNWPNALLLNLNIPPCEKNKIKELSWTRLSIRKYKNQFSKREDPRGDDYYWLAGEAVLDLKSKGYGPKNWPSDVSQIEENKISLTPVETDLFWRGSLDVLPKINASFINAS.

A divalent metal cation contacts are provided by D11, D12, S43, and N101.

The protein belongs to the SurE nucleotidase family. A divalent metal cation is required as a cofactor.

Its subcellular location is the cytoplasm. It catalyses the reaction a ribonucleoside 5'-phosphate + H2O = a ribonucleoside + phosphate. Its function is as follows. Nucleotidase that shows phosphatase activity on nucleoside 5'-monophosphates. The polypeptide is 5'-nucleotidase SurE (Prochlorococcus marinus (strain MIT 9515)).